The following is a 557-amino-acid chain: Copine-6 (557 aa).

C2 domains are found at residues 1–127 and 134–263; these read MSDP…TKPL and TAGK…MQWD. The Ca(2+) site is built by Asp-167, Asp-173, Asp-229, Asp-231, and Asp-237. The segment at 244-303 is linker region; the sequence is STFQEMQEGTANPGQEMQWDCINPKYRDKKKNYKSSGTVVLAQCTVEKVHTFLDYIMGGC. The region spanning 306-526 is the VWFA domain; it reads SFTVAIDFTA…ALAKCVLAEV (221 aa).

This sequence belongs to the copine family. As to quaternary structure, interacts (via second C2 domain) with OS9 (via C-terminus); this interaction occurs in a calcium-dependent manner in vitro. May interact with NECAB1. Requires Ca(2+) as cofactor. As to expression, expressed in the brain. Expressed in pyramidal cells, granule cells, and neurons in the dentate gyrus of the hippocampus and in granule cells of the olfactory bulb (at protein level). Expressed in pyramidal cells of the CA1-CA3 regions, in granule cells of the dentate gyrus, in granule cells of the olfactory bulbs, in the mitral cell layer and in neurons of the cerebral cortex layer II, brainstem and spinal cord. Not detected in glial cells.

It is found in the cytoplasm. Its subcellular location is the cell membrane. The protein localises to the endosome. It localises to the cytoplasmic vesicle. The protein resides in the clathrin-coated vesicle. It is found in the perikaryon. Its subcellular location is the cell projection. The protein localises to the dendrite. Calcium-dependent phospholipid-binding protein that plays a role in calcium-mediated intracellular processes. Binds phospholipid membranes in a calcium-dependent manner. Plays a role in dendrite formation by melanocytes. The chain is Copine-6 from Mus musculus (Mouse).